The sequence spans 320 residues: o-succinylbenzoate synthase (320 aa).

Residue Lys133 is the Proton donor of the active site. Mg(2+)-binding residues include Asp161, Glu190, and Asp213. Lys235 functions as the Proton acceptor in the catalytic mechanism.

Belongs to the mandelate racemase/muconate lactonizing enzyme family. MenC type 1 subfamily. Requires a divalent metal cation as cofactor.

The enzyme catalyses (1R,6R)-6-hydroxy-2-succinyl-cyclohexa-2,4-diene-1-carboxylate = 2-succinylbenzoate + H2O. Its pathway is quinol/quinone metabolism; 1,4-dihydroxy-2-naphthoate biosynthesis; 1,4-dihydroxy-2-naphthoate from chorismate: step 4/7. It functions in the pathway quinol/quinone metabolism; menaquinone biosynthesis. In terms of biological role, converts 2-succinyl-6-hydroxy-2,4-cyclohexadiene-1-carboxylate (SHCHC) to 2-succinylbenzoate (OSB). In Escherichia coli O9:H4 (strain HS), this protein is o-succinylbenzoate synthase.